Consider the following 623-residue polypeptide: ATP-dependent lipid A-core flippase (623 aa).

Transmembrane regions (helical) follow at residues 66–86, 103–123, 190–210, 290–310, and 317–337; these read LVLA…LAVI, VWFL…CNFF, LVVI…TLII, LTPL…AVAL, and ALTV…FDPI. Residues 67-349 enclose the ABC transmembrane type-1 domain; that stretch reads VLAVLLMAGA…LTNLAGKMQK (283 aa). In terms of domain architecture, ABC transporter spans 382-618; that stretch reads VEFRAVSHRF…NGLYASLYNM (237 aa). 416-423 is an ATP binding site; that stretch reads GRSGSGKT.

This sequence belongs to the ABC transporter superfamily. Lipid exporter (TC 3.A.1.106) family. In terms of assembly, homodimer.

It localises to the cell inner membrane. The catalysed reaction is ATP + H2O + lipid A-core oligosaccharideSide 1 = ADP + phosphate + lipid A-core oligosaccharideSide 2.. In terms of biological role, involved in lipopolysaccharide (LPS) biosynthesis. Translocates lipid A-core from the inner to the outer leaflet of the inner membrane. Transmembrane domains (TMD) form a pore in the inner membrane and the ATP-binding domain (NBD) is responsible for energy generation. This Bordetella pertussis (strain Tohama I / ATCC BAA-589 / NCTC 13251) protein is ATP-dependent lipid A-core flippase.